Reading from the N-terminus, the 370-residue chain is Actin-related protein 2/3 complex subunit 1A-A (370 aa).

6 WD repeats span residues 6 to 45 (FLLE…WVKG), 50 to 89 (EHNG…WKPT), 140 to 179 (PIRS…VDEK), 202 to 241 (SSGG…SVSQ), 244 to 284 (TEFL…TFVS), and 322 to 365 (LHQN…SYIQ).

It belongs to the WD repeat ARPC1 family. In terms of assembly, component of the Arp2/3 complex.

The protein localises to the cytoplasm. It localises to the cytoskeleton. It is found in the nucleus. In terms of biological role, probably functions as a component of the Arp2/3 complex which is involved in regulation of actin polymerization and together with an activating nucleation-promoting factor (NPF) mediates the formation of branched actin networks. In addition to its role in the cytoplasmic cytoskeleton, the Arp2/3 complex also promotes actin polymerization in the nucleus, thereby regulating gene transcription and repair of damaged DNA. The sequence is that of Actin-related protein 2/3 complex subunit 1A-A (arpc1a-a) from Xenopus laevis (African clawed frog).